The primary structure comprises 239 residues: 2,3,4,5-tetrahydropyridine-2,6-dicarboxylate N-acetyltransferase (239 aa).

This sequence belongs to the transferase hexapeptide repeat family. DapH subfamily.

It carries out the reaction (S)-2,3,4,5-tetrahydrodipicolinate + acetyl-CoA + H2O = L-2-acetamido-6-oxoheptanedioate + CoA. It functions in the pathway amino-acid biosynthesis; L-lysine biosynthesis via DAP pathway; LL-2,6-diaminopimelate from (S)-tetrahydrodipicolinate (acetylase route): step 1/3. Catalyzes the transfer of an acetyl group from acetyl-CoA to tetrahydrodipicolinate. This Staphylococcus aureus (strain JH9) protein is 2,3,4,5-tetrahydropyridine-2,6-dicarboxylate N-acetyltransferase.